The sequence spans 344 residues: AA9 family lytic polysaccharide monooxygenase cel61A (344 aa).

Residues 1–21 form the signal peptide; that stretch reads MIQKLSNLLVTALAVATGVVG. Position 22 (H22) interacts with Cu(2+). 2 disulfide bridges follow: C77–C198 and C118–C122. The N-linked (GlcNAc...) asparagine glycan is linked to N80. Residue H107 coordinates Cu(2+). The N-linked (GlcNAc...) asparagine glycan is linked to N158. 2 residues coordinate O2: H184 and Q193. Y195 is a binding site for Cu(2+). The disordered stretch occupies residues 262–310; that stretch reads ATASATVPGGGSGPTSRTTTTARTTQASSRPSSTPPATTSAPAGGPTQT. Over residues 275-310 the composition is skewed to low complexity; that stretch reads PTSRTTTTARTTQASSRPSSTPPATTSAPAGGPTQT. Positions 307–343 constitute a CBM1 domain; that stretch reads PTQTLYGQCGGSGYSGPTRCAPPATCSTLNPYYAQCL.

Belongs to the polysaccharide monooxygenase AA9 family. It depends on Cu(2+) as a cofactor.

It is found in the secreted. It catalyses the reaction [(1-&gt;4)-beta-D-glucosyl]n+m + reduced acceptor + O2 = 4-dehydro-beta-D-glucosyl-[(1-&gt;4)-beta-D-glucosyl]n-1 + [(1-&gt;4)-beta-D-glucosyl]m + acceptor + H2O.. Its function is as follows. Lytic polysaccharide monooxygenase (LPMO) that depolymerizes crystalline and amorphous polysaccharides via the oxidation of scissile alpha- or beta-(1-4)-glycosidic bonds, yielding C1 or C4 oxidation products. Catalysis by LPMOs requires the reduction of the active-site copper from Cu(II) to Cu(I) by a reducing agent and H(2)O(2) or O(2) as a cosubstrate. Shows activity on beta-glucan and amorphous cellulose. Does not show beta-1-3-glucanase, beta-1,6-glucanase, mannanase, xylanase, beta-1,3-galactosidase, amylase, pectinase, nor chitinase activities. The polypeptide is AA9 family lytic polysaccharide monooxygenase cel61A (Hypocrea jecorina (Trichoderma reesei)).